An 85-amino-acid polypeptide reads, in one-letter code: MSLLDYFRSNKKASSASLAKERLQIIVAHQRTERGAPDYFPQMKQEIIEVIRKYVYISEEQVSVQLEQNDDNLSVLELNVTLPER.

The protein belongs to the MinE family.

Its function is as follows. Prevents the cell division inhibition by proteins MinC and MinD at internal division sites while permitting inhibition at polar sites. This ensures cell division at the proper site by restricting the formation of a division septum at the midpoint of the long axis of the cell. The chain is Cell division topological specificity factor from Shewanella amazonensis (strain ATCC BAA-1098 / SB2B).